The sequence spans 899 residues: Protein translocase subunit SecA (899 aa).

ATP is bound by residues Gln-87, 105-109, and Asp-512; that span reads GEGKT. Disordered regions lie at residues 573–592 and 861–899; these read RRIDNQLRGRSGRQGDPGSS and ITVNDDEHPAEPAKSQKNAGRNEPCPCGSGKKYKKCCGK. 4 residues coordinate Zn(2+): Cys-885, Cys-887, Cys-896, and Cys-897.

The protein belongs to the SecA family. As to quaternary structure, monomer and homodimer. Part of the essential Sec protein translocation apparatus which comprises SecA, SecYEG and auxiliary proteins SecDF-YajC and YidC. Zn(2+) serves as cofactor.

It is found in the cell inner membrane. The protein resides in the cytoplasm. It carries out the reaction ATP + H2O + cellular proteinSide 1 = ADP + phosphate + cellular proteinSide 2.. Part of the Sec protein translocase complex. Interacts with the SecYEG preprotein conducting channel. Has a central role in coupling the hydrolysis of ATP to the transfer of proteins into and across the cell membrane, serving as an ATP-driven molecular motor driving the stepwise translocation of polypeptide chains across the membrane. The chain is Protein translocase subunit SecA from Trichlorobacter lovleyi (strain ATCC BAA-1151 / DSM 17278 / SZ) (Geobacter lovleyi).